A 273-amino-acid polypeptide reads, in one-letter code: Shikimate dehydrogenase (NADP(+)) (273 aa).

Residues 14–16 and Thr61 contribute to the shikimate site; that span reads SKS. Lys65 serves as the catalytic Proton acceptor. Residues Asn86 and Asp102 each coordinate shikimate. NADP(+) is bound by residues 126–130, 150–155, and Met213; these read GAGGA and NRTHAK. Tyr215 serves as a coordination point for shikimate. Gly237 contacts NADP(+).

It belongs to the shikimate dehydrogenase family. In terms of assembly, homodimer.

The catalysed reaction is shikimate + NADP(+) = 3-dehydroshikimate + NADPH + H(+). It functions in the pathway metabolic intermediate biosynthesis; chorismate biosynthesis; chorismate from D-erythrose 4-phosphate and phosphoenolpyruvate: step 4/7. Involved in the biosynthesis of the chorismate, which leads to the biosynthesis of aromatic amino acids. Catalyzes the reversible NADPH linked reduction of 3-dehydroshikimate (DHSA) to yield shikimate (SA). This Aeromonas salmonicida (strain A449) protein is Shikimate dehydrogenase (NADP(+)).